Consider the following 473-residue polypeptide: Ribulose bisphosphate carboxylase large chain (473 aa).

Substrate contacts are provided by Asn116 and Thr166. The Proton acceptor role is filled by Lys168. Lys170 provides a ligand contact to substrate. Residues Lys194, Asp196, and Glu197 each contribute to the Mg(2+) site. Position 194 is an N6-carboxylysine (Lys194). His287 acts as the Proton acceptor in catalysis. Substrate-binding residues include Arg288, His320, and Ser372.

It belongs to the RuBisCO large chain family. Type I subfamily. In terms of assembly, heterohexadecamer of 8 large chains and 8 small chains. In R.sphaeroides the complex is approximately 500 kDa. The cofactor is Mg(2+).

The catalysed reaction is 2 (2R)-3-phosphoglycerate + 2 H(+) = D-ribulose 1,5-bisphosphate + CO2 + H2O. It catalyses the reaction D-ribulose 1,5-bisphosphate + O2 = 2-phosphoglycolate + (2R)-3-phosphoglycerate + 2 H(+). Its function is as follows. RuBisCO catalyzes two reactions: the carboxylation of D-ribulose 1,5-bisphosphate, the primary event in carbon dioxide fixation, as well as the oxidative fragmentation of the pentose substrate. Both reactions occur simultaneously and in competition at the same active site. This is Ribulose bisphosphate carboxylase large chain from Thiobacillus denitrificans (strain ATCC 25259 / T1).